We begin with the raw amino-acid sequence, 436 residues long: Tubulin epsilon and delta complex protein 2 (436 aa).

Disordered regions lie at residues 53-76 and 94-191; these read ARTP…PSSQ and VRKG…PSSA. Over residues 111 to 131 the composition is skewed to low complexity; it reads TSKAATSGAAAASHPRAPSRG. The span at 153 to 170 shows a compositional bias: basic and acidic residues; sequence DYPEHRLRSKGDKTHVRT. Ser-161 carries the post-translational modification Phosphoserine.

Interacts with TEDC1. Found in a complex with TEDC1, TEDC2, TUBE1 and TUBD1.

The protein resides in the cell projection. The protein localises to the cilium. Its subcellular location is the cytoplasm. It localises to the cytoskeleton. It is found in the microtubule organizing center. The protein resides in the centrosome. The protein localises to the centriole. Functionally, acts as a positive regulator of ciliary hedgehog signaling. Required for centriole stability. This Mus musculus (Mouse) protein is Tubulin epsilon and delta complex protein 2.